The following is an 84-amino-acid chain: MTFYERTVDLGLRAYKLTLSPLIGRQCRFTPSCSEYTAAALKDHGPLKGSWLGLRRICRCNPFGGSGYDPPPPRHQPRKWKCEE.

The interval G64–E84 is disordered. Residues H75–E84 are compositionally biased toward basic residues.

The protein belongs to the UPF0161 family.

Its subcellular location is the cell inner membrane. Could be involved in insertion of integral membrane proteins into the membrane. In Caulobacter vibrioides (strain ATCC 19089 / CIP 103742 / CB 15) (Caulobacter crescentus), this protein is Putative membrane protein insertion efficiency factor.